The primary structure comprises 408 residues: Argininosuccinate synthase (408 aa).

ATP is bound by residues 12-20 (AYSGGLDTS) and Ala-39. L-citrulline contacts are provided by Tyr-90 and Ser-95. Gly-120 contacts ATP. L-aspartate contacts are provided by Thr-122, Asn-126, and Asp-127. Asn-126 contacts L-citrulline. Residues Arg-130, Ser-181, Ser-190, Glu-266, and Tyr-278 each coordinate L-citrulline.

The protein belongs to the argininosuccinate synthase family. Type 1 subfamily. In terms of assembly, homotetramer.

The protein resides in the cytoplasm. The catalysed reaction is L-citrulline + L-aspartate + ATP = 2-(N(omega)-L-arginino)succinate + AMP + diphosphate + H(+). The protein operates within amino-acid biosynthesis; L-arginine biosynthesis; L-arginine from L-ornithine and carbamoyl phosphate: step 2/3. This is Argininosuccinate synthase from Methylococcus capsulatus (strain ATCC 33009 / NCIMB 11132 / Bath).